A 429-amino-acid polypeptide reads, in one-letter code: ATP-sensitive inward rectifier potassium channel 12 (429 aa).

Over 1-76 the chain is Cytoplasmic; the sequence is MTAGRVNPYS…IADMFTTCVD (76 aa). Residues 77-103 traverse the membrane as a helical segment; the sequence is IRWRYMLLLFSLAFLVSWLLFGLIFWL. A 1,2-diacyl-sn-glycero-3-phospho-(1D-myo-inositol-4,5-bisphosphate)-binding residues include R78 and R80. The Extracellular portion of the chain corresponds to 104-129; that stretch reads IALIHGDLENPGGDDTFKPCVLQVNG. A disulfide bond links C123 and C155. Positions 130-146 form an intramembrane region, helical; Pore-forming; sequence FVAAFLFSIETQTTIGY. Positions 143, 144, 145, and 146 each coordinate K(+). Positions 143–148 match the Selectivity filter motif; it reads TIGYGF. The Extracellular portion of the chain corresponds to 147–155; that stretch reads GFRCVTEEC. The helical transmembrane segment at 156-183 threads the bilayer; the sequence is PLAVFMVVVQSIVGCIIDSFMIGAIMAK. Residues K183 and K188 each coordinate a 1,2-diacyl-sn-glycero-3-phospho-(1D-myo-inositol-4,5-bisphosphate). Residues 184–429 lie on the Cytoplasmic side of the membrane; it reads MARPKKRAQT…QRSYRRESEI (246 aa). Residues 386 to 407 are disordered; that stretch reads RDEDEEDDDSRGLDDLSPDNRH. Positions 395–407 are enriched in basic and acidic residues; that stretch reads SRGLDDLSPDNRH.

It belongs to the inward rectifier-type potassium channel family. As to quaternary structure, homotetramer.

The protein resides in the membrane. Its subcellular location is the cell membrane. It localises to the sarcolemma. It is found in the T-tubule. It carries out the reaction K(+)(in) = K(+)(out). With respect to regulation, activated by phosphatidylinositol 4,5-bisphosphate (PtdIns(4,5)P2). PtdIns(4,5)P2 binding to the cytoplasmic side of the channel triggers a conformation change leading to channel opening. Its function is as follows. Inward rectifying potassium channel that probably participates in controlling the resting membrane potential in electrically excitable cells. Probably participates in establishing action potential waveform and excitability of neuronal and muscle tissues. Inward rectifier potassium channels are characterized by a greater tendency to allow potassium to flow into the cell rather than out of it. Their voltage dependence is regulated by the concentration of extracellular potassium; as external potassium is raised, the voltage range of the channel opening shifts to more positive voltages. The inward rectification is mainly due to the blockage of outward current by internal magnesium. The protein is ATP-sensitive inward rectifier potassium channel 12 (KCNJ12) of Gallus gallus (Chicken).